The following is a 575-amino-acid chain: Sulfite reductase [NADPH] hemoprotein beta-component (575 aa).

[4Fe-4S] cluster contacts are provided by cysteine 439, cysteine 445, cysteine 484, and cysteine 488. Residue cysteine 488 participates in siroheme binding.

Belongs to the nitrite and sulfite reductase 4Fe-4S domain family. As to quaternary structure, alpha(8)-beta(8). The alpha component is a flavoprotein, the beta component is a hemoprotein. Requires siroheme as cofactor. [4Fe-4S] cluster serves as cofactor.

The enzyme catalyses hydrogen sulfide + 3 NADP(+) + 3 H2O = sulfite + 3 NADPH + 4 H(+). The protein operates within sulfur metabolism; hydrogen sulfide biosynthesis; hydrogen sulfide from sulfite (NADPH route): step 1/1. Component of the sulfite reductase complex that catalyzes the 6-electron reduction of sulfite to sulfide. This is one of several activities required for the biosynthesis of L-cysteine from sulfate. This is Sulfite reductase [NADPH] hemoprotein beta-component from Blochmanniella pennsylvanica (strain BPEN).